A 381-amino-acid polypeptide reads, in one-letter code: L-lactate dehydrogenase (381 aa).

The region spanning 1–380 (MIISASTDYR…TRDSLVRELG (380 aa)) is the FMN hydroxy acid dehydrogenase domain. Tyr-24 is a binding site for substrate. FMN-binding residues include Ser-106 and Gln-127. A substrate-binding site is contributed by Tyr-129. Thr-155 is an FMN binding site. Arg-164 contacts substrate. Lys-251 lines the FMN pocket. His-275 serves as the catalytic Proton acceptor. Arg-278 is a substrate binding site. 306–330 (DSGIRSGLDVVRMIALGADTVLIGR) contributes to the FMN binding site.

The protein belongs to the FMN-dependent alpha-hydroxy acid dehydrogenase family. Homotetramer. Requires FMN as cofactor.

The protein resides in the cell inner membrane. It carries out the reaction (S)-lactate + A = pyruvate + AH2. Catalyzes the conversion of L-lactate to pyruvate. Is coupled to the respiratory chain. This is L-lactate dehydrogenase from Pseudomonas putida (strain ATCC 700007 / DSM 6899 / JCM 31910 / BCRC 17059 / LMG 24140 / F1).